Reading from the N-terminus, the 140-residue chain is uncharacterized protein (140 aa).

Belongs to the MG439/MG440 family.

This is an uncharacterized protein from Mycoplasma pneumoniae (strain ATCC 29342 / M129 / Subtype 1) (Mycoplasmoides pneumoniae).